We begin with the raw amino-acid sequence, 310 residues long: Aspartate carbamoyltransferase catalytic subunit (310 aa).

The carbamoyl phosphate site is built by Arg-57 and Thr-58. Residue Lys-86 coordinates L-aspartate. Residues Arg-107, His-135, and Gln-138 each coordinate carbamoyl phosphate. 2 residues coordinate L-aspartate: Arg-168 and Arg-229. 2 residues coordinate carbamoyl phosphate: Leu-268 and Pro-269.

Belongs to the aspartate/ornithine carbamoyltransferase superfamily. ATCase family. Heterooligomer of catalytic and regulatory chains.

The enzyme catalyses carbamoyl phosphate + L-aspartate = N-carbamoyl-L-aspartate + phosphate + H(+). It participates in pyrimidine metabolism; UMP biosynthesis via de novo pathway; (S)-dihydroorotate from bicarbonate: step 2/3. Its function is as follows. Catalyzes the condensation of carbamoyl phosphate and aspartate to form carbamoyl aspartate and inorganic phosphate, the committed step in the de novo pyrimidine nucleotide biosynthesis pathway. The sequence is that of Aspartate carbamoyltransferase catalytic subunit from Thermococcus kodakarensis (strain ATCC BAA-918 / JCM 12380 / KOD1) (Pyrococcus kodakaraensis (strain KOD1)).